The chain runs to 317 residues: tRNA(Ile)-lysidine synthase (317 aa).

Residue Ser30 to Ser35 coordinates ATP.

Belongs to the tRNA(Ile)-lysidine synthase family.

It localises to the cytoplasm. The enzyme catalyses cytidine(34) in tRNA(Ile2) + L-lysine + ATP = lysidine(34) in tRNA(Ile2) + AMP + diphosphate + H(+). In terms of biological role, ligates lysine onto the cytidine present at position 34 of the AUA codon-specific tRNA(Ile) that contains the anticodon CAU, in an ATP-dependent manner. Cytidine is converted to lysidine, thus changing the amino acid specificity of the tRNA from methionine to isoleucine. The protein is tRNA(Ile)-lysidine synthase of Chlamydia felis (strain Fe/C-56) (Chlamydophila felis).